Reading from the N-terminus, the 137-residue chain is Small ribosomal subunit protein uS12 (137 aa).

The segment at 1–28 (MPTINQLVRKPRKSKAKKSDSPALNKGF) is disordered. Aspartate 102 bears the 3-methylthioaspartic acid mark.

It belongs to the universal ribosomal protein uS12 family. In terms of assembly, part of the 30S ribosomal subunit. Contacts proteins S8 and S17. May interact with IF1 in the 30S initiation complex.

In terms of biological role, with S4 and S5 plays an important role in translational accuracy. Functionally, interacts with and stabilizes bases of the 16S rRNA that are involved in tRNA selection in the A site and with the mRNA backbone. Located at the interface of the 30S and 50S subunits, it traverses the body of the 30S subunit contacting proteins on the other side and probably holding the rRNA structure together. The combined cluster of proteins S8, S12 and S17 appears to hold together the shoulder and platform of the 30S subunit. The protein is Small ribosomal subunit protein uS12 of Staphylococcus carnosus (strain TM300).